Here is a 246-residue protein sequence, read N- to C-terminus: Acetoacetate decarboxylase (246 aa).

K115 (schiff-base intermediate with acetoacetate) is an active-site residue.

It belongs to the ADC family.

It carries out the reaction acetoacetate + H(+) = acetone + CO2. Its function is as follows. Catalyzes the conversion of acetoacetate to acetone and carbon dioxide. This Clostridium beijerinckii (strain ATCC 51743 / NCIMB 8052) (Clostridium acetobutylicum) protein is Acetoacetate decarboxylase.